Here is a 367-residue protein sequence, read N- to C-terminus: Polygalacturonase (367 aa).

An N-terminal signal peptide occupies residues 1 to 19; sequence MSIRLIAVLSAASIAVTSA. A disulfide bond links Cys-27 and Cys-42. A glycan (N-linked (GlcNAc...) asparagine) is linked at Asn-185. The stretch at 187–208 is one PbH1 1 repeat; the sequence is TDQLTIEDTVVKNQDDCIAVNQ. The active-site Proton donor is Asp-201. Cys-203 and Cys-219 form a disulfide bridge. His-223 is an active-site residue. Residues 240–261 form a PbH1 2 repeat; sequence VRNVTFSNSVVRKSRNGIHIKT. Asn-242 carries an N-linked (GlcNAc...) asparagine glycan. The cysteines at positions 334 and 339 are disulfide-linked. Residues Asn-343 and Asn-357 are each glycosylated (N-linked (GlcNAc...) asparagine). Cys-358 and Cys-367 are joined by a disulfide.

It belongs to the glycosyl hydrolase 28 family. Expressed in larval carcasses and gut, and adult gut.

It localises to the secreted. The protein localises to the cell wall. It catalyses the reaction (1,4-alpha-D-galacturonosyl)n+m + H2O = (1,4-alpha-D-galacturonosyl)n + (1,4-alpha-D-galacturonosyl)m.. In Phaedon cochleariae (Mustard beetle), this protein is Polygalacturonase.